Consider the following 871-residue polypeptide: Isoleucine--tRNA ligase (871 aa).

The 'HIGH' region signature appears at 57–67 (PYANGNLHMGH). Glu554 contributes to the L-isoleucyl-5'-AMP binding site. The short motif at 595–599 (KMSKS) is the 'KMSKS' region element. Residue Lys598 coordinates ATP.

Belongs to the class-I aminoacyl-tRNA synthetase family. IleS type 1 subfamily. Monomer.

It is found in the cytoplasm. The catalysed reaction is tRNA(Ile) + L-isoleucine + ATP = L-isoleucyl-tRNA(Ile) + AMP + diphosphate. Catalyzes the attachment of isoleucine to tRNA(Ile). As IleRS can inadvertently accommodate and process structurally similar amino acids such as valine, to avoid such errors it has two additional distinct tRNA(Ile)-dependent editing activities. One activity is designated as 'pretransfer' editing and involves the hydrolysis of activated Val-AMP. The other activity is designated 'posttransfer' editing and involves deacylation of mischarged Val-tRNA(Ile). This chain is Isoleucine--tRNA ligase, found in Staphylococcus epidermidis.